A 303-amino-acid polypeptide reads, in one-letter code: Porphobilinogen deaminase (303 aa).

The residue at position 240 (cysteine 240) is an S-(dipyrrolylmethanemethyl)cysteine.

Belongs to the HMBS family. As to quaternary structure, monomer. The cofactor is dipyrromethane.

It carries out the reaction 4 porphobilinogen + H2O = hydroxymethylbilane + 4 NH4(+). It functions in the pathway porphyrin-containing compound metabolism; protoporphyrin-IX biosynthesis; coproporphyrinogen-III from 5-aminolevulinate: step 2/4. Functionally, tetrapolymerization of the monopyrrole PBG into the hydroxymethylbilane pre-uroporphyrinogen in several discrete steps. This is Porphobilinogen deaminase from Stenotrophomonas maltophilia (strain K279a).